The sequence spans 234 residues: Probable glycerol uptake facilitator protein (234 aa).

2 helical membrane passes run 3–23 (VYLAEFLGTMLLIILGDGVVA) and 36–56 (GWIVITTGWGLAVAMSVYLVG). The NPA 1 signature appears at 64–66 (NPA). Helical transmembrane passes span 82–102 (VPGYIFSQILGAFVGAILVYL), 134–154 (LLTEIIGTMVLLMGVLGIGAN), and 164–184 (LVGFLVWSIGLSLGGPTGYAI). The NPA 2 signature appears at 185–187 (NPA). A helical transmembrane segment spans residues 214–234 (VPIIGPIIGGILGASLYNWLF).

This sequence belongs to the MIP/aquaporin (TC 1.A.8) family.

The protein resides in the cell membrane. It carries out the reaction glycerol(in) = glycerol(out). Functionally, mediates glycerol diffusion across the cytoplasmic membrane via a pore-type mechanism. The protein is Probable glycerol uptake facilitator protein (glpF) of Thermotoga maritima (strain ATCC 43589 / DSM 3109 / JCM 10099 / NBRC 100826 / MSB8).